A 358-amino-acid chain; its full sequence is Nuclear receptor subfamily 1 group I member 3 (358 aa).

The segment at residues Pro18–Ser93 is a DNA-binding region (nuclear receptor). The segment at Cys21–Cys41 adopts an NR C4-type zinc-finger fold. At Thr48 the chain carries Phosphothreonine; by PKC. An NR C4-type zinc finger spans residues Cys57–Cys81. In terms of domain architecture, NR LBD spans Gln119–Ser358.

It belongs to the nuclear hormone receptor family. NR1 subfamily. As to quaternary structure, heterodimer of NR1I3 and RXR. Interacts with PSMC4. Interacts with ECT2. Directly interacts with DNAJC7; this complex may also include HSP90. Interacts with CRY1. Interacts with CRY2 in a ligand-dependent manner. In terms of processing, phosphorylated at Thr-48 by PKC, dephosphorylation of Thr-48 is required for nuclear translocation and activation. As to expression, predominantly expressed in liver.

It is found in the nucleus. Its subcellular location is the cytoplasm. The protein localises to the cytoskeleton. Binds and transactivates the retinoic acid response elements that control expression of the retinoic acid receptor beta 2 and alcohol dehydrogenase 3 genes. Transactivates both the phenobarbital responsive element module of the human CYP2B6 gene and the CYP3A4 xenobiotic response element. The chain is Nuclear receptor subfamily 1 group I member 3 (Nr1i3) from Mus musculus (Mouse).